A 558-amino-acid polypeptide reads, in one-letter code: Arginine--tRNA ligase (558 aa).

Residues 134-144 carry the 'HIGH' region motif; it reads ANPTGPMVLVQ.

It belongs to the class-I aminoacyl-tRNA synthetase family. Monomer.

It localises to the cytoplasm. The catalysed reaction is tRNA(Arg) + L-arginine + ATP = L-arginyl-tRNA(Arg) + AMP + diphosphate. The polypeptide is Arginine--tRNA ligase (Symbiobacterium thermophilum (strain DSM 24528 / JCM 14929 / IAM 14863 / T)).